A 504-amino-acid chain; its full sequence is Putative pentatricopeptide repeat-containing protein At3g28640 (504 aa).

PPR repeat units follow at residues 77–107 (NSFV…MVKE), 115–149 (SYLT…GVFL), 151–181 (DSHV…IPQP), 182–216 (DVVK…GLEP), 217–251 (DEFS…SWIE), 253–287 (DVFV…NVFS), 288–319 (WAAL…GIKP), 320–350 (DSVV…MEAR), and 356–390 (KHEH…PLAS). A type E motif region spans residues 391–470 (VWGALLNGCR…TPGWSVLEVD (80 aa)). The type E(+) motif stretch occupies residues 471 to 501 (GNVTKFVSGDVSHPNLLQIHTVIHLLSVDAL).

This sequence belongs to the PPR family. PCMP-E subfamily.

In Arabidopsis thaliana (Mouse-ear cress), this protein is Putative pentatricopeptide repeat-containing protein At3g28640 (PCMP-E79).